The primary structure comprises 437 residues: Diaminopimelate decarboxylase (437 aa).

Lys81 carries the N6-(pyridoxal phosphate)lysine modification. Pyridoxal 5'-phosphate is bound by residues Gly256 and 298-301 (EPGR). Positions 301, 337, and 341 each coordinate substrate. Cys366 acts as the Proton donor in catalysis. Residues Glu367 and Tyr396 each contribute to the substrate site. Tyr396 is a pyridoxal 5'-phosphate binding site.

It belongs to the Orn/Lys/Arg decarboxylase class-II family. LysA subfamily. As to quaternary structure, homodimer. Pyridoxal 5'-phosphate is required as a cofactor.

The catalysed reaction is meso-2,6-diaminopimelate + H(+) = L-lysine + CO2. It functions in the pathway amino-acid biosynthesis; L-lysine biosynthesis via DAP pathway; L-lysine from DL-2,6-diaminopimelate: step 1/1. Functionally, specifically catalyzes the decarboxylation of meso-diaminopimelate (meso-DAP) to L-lysine. In Actinosynnema pretiosum subsp. auranticum, this protein is Diaminopimelate decarboxylase.